The chain runs to 390 residues: Chorismate synthase 2 (390 aa).

NADP(+)-binding residues include Arg-39 and Arg-45. Residues 132 to 134 (RSS), 253 to 254 (NA), Gly-298, 313 to 317 (KPIPT), and Arg-339 each bind FMN.

The protein belongs to the chorismate synthase family. As to quaternary structure, homotetramer. It depends on FMNH2 as a cofactor.

The enzyme catalyses 5-O-(1-carboxyvinyl)-3-phosphoshikimate = chorismate + phosphate. It functions in the pathway metabolic intermediate biosynthesis; chorismate biosynthesis; chorismate from D-erythrose 4-phosphate and phosphoenolpyruvate: step 7/7. Catalyzes the anti-1,4-elimination of the C-3 phosphate and the C-6 proR hydrogen from 5-enolpyruvylshikimate-3-phosphate (EPSP) to yield chorismate, which is the branch point compound that serves as the starting substrate for the three terminal pathways of aromatic amino acid biosynthesis. This reaction introduces a second double bond into the aromatic ring system. This Bacillus thuringiensis subsp. konkukian (strain 97-27) protein is Chorismate synthase 2.